The primary structure comprises 278 residues: Dermonecrotic toxin LlSicTox-alphaIII3iii (278 aa).

His-5 is a catalytic residue. The Mg(2+) site is built by Glu-25 and Asp-27. The active-site Nucleophile is His-40. Cysteines 44 and 50 form a disulfide. Residue Asp-84 participates in Mg(2+) binding.

It belongs to the arthropod phospholipase D family. Class I subfamily. The cofactor is Mg(2+). In terms of tissue distribution, expressed by the venom gland.

The protein resides in the secreted. It carries out the reaction an N-(acyl)-sphingosylphosphocholine = an N-(acyl)-sphingosyl-1,3-cyclic phosphate + choline. The enzyme catalyses an N-(acyl)-sphingosylphosphoethanolamine = an N-(acyl)-sphingosyl-1,3-cyclic phosphate + ethanolamine. It catalyses the reaction a 1-acyl-sn-glycero-3-phosphocholine = a 1-acyl-sn-glycero-2,3-cyclic phosphate + choline. The catalysed reaction is a 1-acyl-sn-glycero-3-phosphoethanolamine = a 1-acyl-sn-glycero-2,3-cyclic phosphate + ethanolamine. Its function is as follows. Dermonecrotic toxins cleave the phosphodiester linkage between the phosphate and headgroup of certain phospholipids (sphingolipid and lysolipid substrates), forming an alcohol (often choline) and a cyclic phosphate. This toxin acts on sphingomyelin (SM). It may also act on ceramide phosphoethanolamine (CPE), lysophosphatidylcholine (LPC) and lysophosphatidylethanolamine (LPE), but not on lysophosphatidylserine (LPS), and lysophosphatidylglycerol (LPG). It acts by transphosphatidylation, releasing exclusively cyclic phosphate products as second products. Induces dermonecrosis, hemolysis, increased vascular permeability, edema, inflammatory response, and platelet aggregation. The protein is Dermonecrotic toxin LlSicTox-alphaIII3iii of Loxosceles laeta (South American recluse spider).